We begin with the raw amino-acid sequence, 638 residues long: Probable inactive receptor kinase At4g23740 (638 aa).

Positions 1–24 (MEALRIYLWSLCLSLCLIIYGANS) are cleaved as a signal peptide. LRR repeat units lie at residues 94 to 117 (ALRVLSLRSNLISGEFPKDFVELK), 118 to 139 (DLAFLYLQDNNLSGPLPLDFSV), 142 to 165 (NLTSVNLSNNGFNGTIPSSLSRLK), 166 to 188 (RIQSLNLANNTLSGDIPDLSVLS), and 189 to 198 (SLQHIDLSNN). Residues 257-277 (VFLLIVIAVSIVVITALAFVL) traverse the membrane as a helical segment. The region spanning 337–608 (RASAEVLGKG…SDLVRLIENV (272 aa)) is the Protein kinase domain. Ser-339 bears the Phosphoserine mark. 343–351 (LGKGTFGTT) is an ATP binding site. A Phosphothreonine modification is found at Thr-360. Residue Lys-365 participates in ATP binding. Ser-416 and Ser-419 each carry phosphoserine. Phosphothreonine is present on residues Thr-436 and Thr-509. Phosphoserine is present on Ser-513. The disordered stretch occupies residues 612–638 (RTSIEPEPELKPKSENGASETSTPSEI). Residues 613 to 625 (TSIEPEPELKPKS) are compositionally biased toward basic and acidic residues. Polar residues predominate over residues 627-638 (NGASETSTPSEI).

It belongs to the protein kinase superfamily.

The protein localises to the membrane. The polypeptide is Probable inactive receptor kinase At4g23740 (Arabidopsis thaliana (Mouse-ear cress)).